A 511-amino-acid polypeptide reads, in one-letter code: Cytochrome P450 89A9 (511 aa).

Residues 6–26 (IIFLIISSLTFSIFLKLIFFF) form a helical; Signal-anchor for type II membrane protein membrane-spanning segment. Heme is bound at residue Cys454.

Belongs to the cytochrome P450 family. Heme is required as a cofactor.

It localises to the endoplasmic reticulum membrane. It carries out the reaction primary fluorescent chlorophyll catabolite + reduced [NADPH--hemoprotein reductase] + O2 = primary fluorescent dioxobilin-type chlorophyll catabolite + formate + oxidized [NADPH--hemoprotein reductase] + 2 H(+). It participates in porphyrin-containing compound metabolism; chlorophyll degradation. Its function is as follows. Involved in the chlorophyll breakdown by its action in nonpolar primary fluorescent chlorophyll catabolite (pFCC) decarbonylation. Involved in the formation of major chlorophyll breakdown products, including non-fluorescent dioxobilin-type chlorophyll catabolites (NDCCs), during leaf senescence. This is Cytochrome P450 89A9 from Arabidopsis thaliana (Mouse-ear cress).